Reading from the N-terminus, the 493-residue chain is Guanosine-5'-triphosphate,3'-diphosphate pyrophosphatase (493 aa).

Belongs to the GppA/Ppx family. GppA subfamily.

It catalyses the reaction guanosine 3'-diphosphate 5'-triphosphate + H2O = guanosine 3',5'-bis(diphosphate) + phosphate + H(+). It participates in purine metabolism; ppGpp biosynthesis; ppGpp from GTP: step 2/2. In terms of biological role, catalyzes the conversion of pppGpp to ppGpp. Guanosine pentaphosphate (pppGpp) is a cytoplasmic signaling molecule which together with ppGpp controls the 'stringent response', an adaptive process that allows bacteria to respond to amino acid starvation, resulting in the coordinated regulation of numerous cellular activities. The polypeptide is Guanosine-5'-triphosphate,3'-diphosphate pyrophosphatase (Salmonella dublin (strain CT_02021853)).